Reading from the N-terminus, the 237-residue chain is Small ribosomal subunit protein uS3 (237 aa).

Positions 39–107 (VRQFLTKELK…PAQINISEVR (69 aa)) constitute a KH type-2 domain.

It belongs to the universal ribosomal protein uS3 family. As to quaternary structure, part of the 30S ribosomal subunit. Forms a tight complex with proteins S10 and S14.

Binds the lower part of the 30S subunit head. Binds mRNA in the 70S ribosome, positioning it for translation. This Aeromonas hydrophila subsp. hydrophila (strain ATCC 7966 / DSM 30187 / BCRC 13018 / CCUG 14551 / JCM 1027 / KCTC 2358 / NCIMB 9240 / NCTC 8049) protein is Small ribosomal subunit protein uS3.